The chain runs to 279 residues: NLP effector protein 9 (279 aa).

Positions 1-19 are cleaved as a signal peptide; the sequence is MKISNLLGVLVVFLAVVKG. Positions 151–161 match the Conserved undecapeptide motif motif; the sequence is AIMYAWYFPDI. Asn-176 carries N-linked (GlcNAc...) asparagine glycosylation.

The protein belongs to the Necrosis inducing protein (NPP1) family.

It is found in the secreted. Its function is as follows. Secreted effector that acts as a pathogen-associated molecular pattern (PAMP) recognized by the plant immune system. Seems not to induce necrosis in Nicotiana benthamiana leaves. This chain is NLP effector protein 9, found in Plasmopara viticola (Downy mildew of grapevine).